The following is a 46-amino-acid chain: Endochitinase 4 (46 aa).

The protein belongs to the glycosyl hydrolase 19 family. Chitinase class I subfamily.

It catalyses the reaction Random endo-hydrolysis of N-acetyl-beta-D-glucosaminide (1-&gt;4)-beta-linkages in chitin and chitodextrins.. Defense against chitin-containing fungal and bacterial pathogens. The protein is Endochitinase 4 of Arachis hypogaea (Peanut).